A 3530-amino-acid chain; its full sequence is MAKEEDEEKKAKKGKKGKKAPEPEKPKRSLKGTSRLFMGFRDRTPKISKKGQFRSASAFFWGLHTGPQKTKRKRKARTVLKSTSKLMTQMRMGKKKRAMKGKKPSFMVIRFPGRRGYGRLRPRARSLSKASTAINWLTKKFLLKKAEESGSEQATVDAWLQRSSSRMGSRKLPFPSGAEILRPGGRLRRFPRSRSIYASGEPLGFLPFEDEAPFHHSGSRKSLYGLEGFQDLGEYYDYHRDGDDYYDRQSLHRYEEQEPYLAGLGPYSPAWPPYGDHYYGYPPEDPYDYYHPDYYGGPFDPGYTYGYGYDDYEPPYAPPSGYSSPYSYHDGYEGEAHPYGYYLDPYAPYDAPYPPYDLPYHTPYDVPYFDPYGVHYTVPYAEGVYGGGDEAIYPPEVPYFYPEESASAFVYPWVPPPIPSPHNPYAHAMDDIAELEEPEDAGVERQGTSFRLPSAAFFEQQGMDKPARSKLSLIRKFRLFPRPQVKLFGKEKLEVPLPPSLDIPLPLGDADEEEDEEELPPVSAVPYGHPFWGFLTPRQRNLQRALSAFGAHRGLGFGPEFGRPVPRPATSLARFLKKTLSEKKPIARLRGSQKARAGGPAVREAAYKRFGYKLAGMDPEKPGTPIVLRRAQPRARSSNDARRPPAPQPAPRTLSHWSALLSPPVPPRPPSSGPPPAPPLSPALSGLPRPASPYGSLRRHPPPWAAPAHVPPAPQASWWAFVEPPAVSPEVPPDLLAFPGPRPSFRGSRRRGAAFGFPGASPRASRRRAWSPLASPQPSLRSSPGLGYCSPLAPPSPQLSLRTGPFQPPFLPPARRPRSLQESPAPRRAAGRLGPPGSPLPGSPRPPSPPLGLCHSPRRSSLNLPSRLPHTWRRLSEPPTRAVKPQVRLPFHRPPRAGAWRAPLEHRESPREPEDSETPWTVPPLAPSWDVDMPPTQRPPSPWPGGAGSRRGFSRPPPVPENPFLQLLGPVPSPTLQPEDPAADMTRVFLGRHHEPGPGQLTKSAGPTPEKPEEEATLGDPQLPAETKPPTPAPPKDVTPPKDITPPKDVLPEQKTLRPSLSYPLAACDQTRATWPPWHRWGTLPQAAAPLAPIRAPEPLPKGGERRQAAPGRFAVVMPRVQKLSSFQRVGPATLKPQVQPIQDPKPRACSLRWSCLWLRADAYGPWPRVHTHPQSCHLGPGAACLSLRGSWEEVGPPSWRNKMHSIRNLPSMRFREQHGEDGVEDMTQLEDLQETTVLSNLKIRFERNLIYTYIGSILVSVNPYQMFGIYGPEQVQQYNGRALGENPPHLFAVANLAFAKMLDAKQNQCIIISGESGSGKTEATKLILRYLAAMNQKREVMQQIKILEATPLLESFGNAKTVRNDNSSRFGKFVEIFLEGGVISGAITSQYLLEKSRIVFQAKNERNYHIFYELLAGLPAQLRQAFSLQEAETYYYLNQGGNCEIAGKSDADDFRRLLAAMEVLGFSSEDQDSIFRILASILHLGNVYFEKYETDAQEVASVVSAREIQAVAELLQISPEGLQKAITFKVTETMREKIFTPLTVESAVDARDAIAKVLYALLFSWLITRVNALVSPRQDTLSIAILDIYGFEDLSFNSFEQLCINYANENLQYLFNKIVFQEEQEEYIREQIDWQEITFADNQPCINLISLKPYGILRILDDQCCFPQATDHTFLQKCHYHHGANPLYSKPKMPLPEFTIKHYAGKVTYQVHKFLDKNHDQVRQDVLDLFVRSRTRVVAHLFSSHAPQAAPQRLGKSSSVTRLYKAHTVAAKFQQSLLDLVEKMERCNPLFMRCLKPNHKKEPGLFEPDVVMAQLRYSGVLETVRIRKEGFPVRLPFQGFIDRYCCLVALKHDLPANGDMCVSVLSRLCKVMPNMYRVGVSKLFLKEHLYQLLESMREHVLNLAALTLQRCLRGFFIKRRFRSLRHKIILLQSRARGYLARQRYQQMRRSLVKFRSLVHAYVSRRRYLKLRAEWRCQVEGALLWEQEELSKREVVAVGHLEVPAELAGLLQAVAGLGLAQVPQVAPVRTPRLQAEPRVTLPLDINNYPMAKFVQCHFKEPAFGMLTVPLRTPLTQLPAEHHAEAVSIFKLILRFMGDPHLHGARENIFGNYIVQKGLAVPELRDEILAQLANQVWHNHNAHNAERGWLLLAACLSGFAPSPCFNKYLLKFVSDYGRNGFQAVCQHRLMQAMGRAQQQGSGAARTLPPTQLEWTATYEKASMALDVGCFNGDQFSCPVHSWSTGEEVAGDILRHRGLADGWRGWTVAMKNGVQWAELAGHDYVLDLVSDLELLRDFPRQKSYFIVGTEGPAASRGGPKVVFGNSWDSDEDMSTRPQPQEHMPKVLDSDGYSSHNQDGTNGETEAQRGTATHQESDSLGEPAVPHKGLDCYLDSLFDPVLSYGDADLEKPTAIAYRMKGGGQPGGGSSSGTEDTPRRPPEPKPIPGLDASTLALQQAFIHKQAVLLAREMTLQATALQQQPLSAALRSLPAEKPPAPEAQPTSVGTGPPAKPVLLRATPKPLAPAPLAKAPRLPIKPVAAPVLAQDQASPETTSPSPELVRYSTLNSEHFPQPTQQIKNIVRQYQQPFRGGRPEALRKDGGKVFMKRPDPHEEALMILKGQMTHLAAAPGTQVSREAVALVKPVTSAPRPSMAPTSALPSRSLEPPEELTQTRLHRLINPNFYGYQDAPWKIFLRKEVFYPKDSYSHPVQLDLLFRQILHDTLSEACLRISEDERLRMKALFAQNQLDTQKPLVTESVKRAVVSTARDTWEVYFSRIFPATGSVGTGVQLLAVSHVGIKLLRMVKGGQEAGGQLRVLRAYSFADILFVTMPSQNMLEFNLASEKVILFSARAHQVKTLVDDFILELKKDSDYVVAVRNFLPEDPALLAFHKGDIIHLQPLEPPRVGYSAGCVVRRKVVYLEELRRRGPDFGWRFGTIHGRVGRFPSELVQPAAAPDFLQLPTEPGRGRAAAVAAAVASAAAAQEVGRRREGPPVRARSADHGEDALALPPYTMLEFAQKYFRDPQRRPQDGLRLKSKEPRESRTLEDMLCFTKTPLQESLIELSDSSLSKMATDMFLAVMRFMGDAPLKGQSDLDVLCNLLKLCGDHEVMRDECYCQVVKQITDNTSSKQDSCQRGWRLLYIVTAYHSCSEVLHPHLTRFLQDVSRTPGLPFQGIAKACEQNLQKTLRFGGRLELPSSIELRAMLAGRSSKRQLFLLPGGLERHLKIKTCTVALDVVEEICAEMALTRPEAFNEYVIFVVTNRGQHVCPLSRRAYILDVASEMEQVDGGYMLWFRRVLWDQPLKFENELYVTMHYNQVLPDYLKGLFSSVPASRPSEQLLQQVSKLASLQHRAKDHFYLPSVREVQEYIPAQLYRTTAGSTWLNLVSQHRQQTQALSPHQARAQFLGLLSALPMFGSSFFFIQSCSNIAVPAPCILAINHNGLNFLSTETHELMVKFPLKEIQSTRTQRPTANSSYPYVEIALGDVAAQRTLQLQLEQGLELCRVVAVHVENLLSAHEKRLTLPPSEITLL.

Disordered regions lie at residues 1-46 (MAKE…RTPK), 615-710 (AGMD…PAHV), and 730-1057 (EVPP…QKTL). Residues 663–681 (PPVPPRPPSSGPPPAPPLS) are compositionally biased toward pro residues. 3 stretches are compositionally biased toward low complexity: residues 682 to 693 (PALSGLPRPASP), 753 to 763 (AAFGFPGASPR), and 823 to 835 (SPAPRRAAGRLGP). The span at 836–850 (PGSPLPGSPRPPSPP) shows a compositional bias: pro residues. The segment covering 859–869 (RSSLNLPSRLP) has biased composition (low complexity). Positions 903–913 (PLEHRESPREP) are enriched in basic and acidic residues. Residues 1027 to 1038 (TKPPTPAPPKDV) are compositionally biased toward pro residues. The 678-residue stretch at 1222–1899 (DGVEDMTQLE…LYQLLESMRE (678 aa)) folds into the Myosin motor domain. 1315–1322 (GESGSGKT) contributes to the ATP binding site. The stretch at 1323-1350 (EATKLILRYLAAMNQKREVMQQIKILEA) forms a coiled coil. Positions 1792–1799 (FMRCLKPN) are actin-binding. A neck or regulatory domain region spans residues 1888–2029 (EHLYQLLESM…AQVPQVAPVR (142 aa)). IQ domains follow at residues 1902–1924 (LNLAALTLQRCLRGFFIKRRFRS), 1925–1954 (LRHKIILLQSRARGYLARQRYQQMRRSLVK), and 1955–1976 (FRSLVHAYVSRRRYLKLRAEWR). The tail stretch occupies residues 2030-3530 (TPRLQAEPRV…TLPPSEITLL (1501 aa)). The 153-residue stretch at 2065 to 2217 (MLTVPLRTPL…PTQLEWTATY (153 aa)) folds into the MyTH4 1 domain. Disordered stretches follow at residues 2311–2381 (AASR…GEPA), 2414–2446 (YRMKGGGQPGGGSSSGTEDTPRRPPEPKPIPGL), 2490–2509 (AEKPPAPEAQPTSVGTGPPA), and 2644–2665 (TSAPRPSMAPTSALPSRSLEPP). The span at 2349-2371 (GYSSHNQDGTNGETEAQRGTATH) shows a compositional bias: polar residues. Residues 2417–2427 (KGGGQPGGGSS) show a composition bias toward gly residues. Residues 2867–2953 (KDSDYVVAVR…PSELVQPAAA (87 aa)) form the SH3 domain. The MyTH4 2 domain maps to 3050-3204 (FTKTPLQESL…PSSIELRAML (155 aa)). Residues 3209-3530 (SKRQLFLLPG…TLPPSEITLL (322 aa)) enclose the FERM domain.

Belongs to the TRAFAC class myosin-kinesin ATPase superfamily. Myosin family. In terms of assembly, interacts with the third PDZ domain of WHRN which is necessary for localization of WHRN to stereocilium tips. Interacts with EPS8. Interacts with FASLG. Highly expressed in pituitary. Also expressed at lower levels in adult brain, kidney, liver, lung, pancreas, placenta and skeletal muscle. Not expressed in brain. In the pituitary, highly expressed in anterior gland cells.

It localises to the cell projection. The protein localises to the stereocilium. The protein resides in the cytoplasm. It is found in the cytoskeleton. Myosins are actin-based motor molecules with ATPase activity. Unconventional myosins serve in intracellular movements. Their highly divergent tails are presumed to bind to membranous compartments, which would be moved relative to actin filaments. Required for the arrangement of stereocilia in mature hair bundles. The protein is Unconventional myosin-XV (MYO15A) of Homo sapiens (Human).